The following is an 863-amino-acid chain: Oleate activated transcription factor 3 (863 aa).

The zn(2)-C6 fungal-type DNA-binding region spans cysteine 19 to cysteine 47. Polar residues predominate over residues aspartate 52 to leucine 63. Positions aspartate 52–tryptophan 99 are disordered.

The protein belongs to the OAF3 family.

It localises to the cytoplasm. The protein localises to the nucleus. Its subcellular location is the mitochondrion. In terms of biological role, transcriptional inhibitor with a significantly increased number of target genes in response to oleate. This Saccharomyces cerevisiae (strain YJM789) (Baker's yeast) protein is Oleate activated transcription factor 3 (OAF3).